The following is a 662-amino-acid chain: Serine/threonine kinase-like domain-containing protein STKLD1 (662 aa).

Positions 1–202 constitute a Protein kinase domain; the sequence is MLNPGALGVN…ILDMATCSFL (202 aa). ATP-binding positions include 2-10 and Lys-25; that span reads LNPGALGVN. The disordered stretch occupies residues 639–662; the sequence is LQEDQLEPPAGQEAPLQGEPLFRP.

It belongs to the protein kinase superfamily. Ser/Thr protein kinase family. STKL subfamily.

This is Serine/threonine kinase-like domain-containing protein STKLD1 (Stkld1) from Mus musculus (Mouse).